Reading from the N-terminus, the 303-residue chain is Cell wall mannoprotein HSP150 (303 aa).

A signal peptide spans methionine 1 to alanine 18. The propeptide occupies alanine 19–arginine 72. 2 PIR1/2/3 repeats span residues lysine 71–alanine 89 and alanine 97–lysine 113. One copy of the PIR1/2/3 3; degenerate repeat lies at threonine 114–threonine 134. PIR1/2/3 repeat units follow at residues alanine 135 to threonine 153, alanine 154 to threonine 171, and threonine 172 to serine 190.

It belongs to the PIR protein family. In terms of processing, covalently linked to beta-1,3-glucan of the inner cell wall layer via an alkali-sensitive ester linkage between the gamma-carboxyl group of glutamic acids, arising from specific glutamines within the PIR1/2/3 repeats, and hydroxyl groups of glucoses of beta-1,3-glucan chains. The propeptide is cleaved off in the late Golgi. While both peptides are secreted, only a fraction of the mature glycoprotein is incorporated into the cell wall. Post-translationally, O-glycosylated. Extensively O-mannosylated.

It is found in the secreted. It localises to the cell wall. Functionally, component of the outer cell wall layer. Required for stability of the cell wall and for optimal growth. Required for resistance against several antifungal and cell wall-perturbing agents and for tolerance to heat shock. The protein is Cell wall mannoprotein HSP150 (HSP150) of Saccharomyces cerevisiae (strain AWRI1631) (Baker's yeast).